Consider the following 62-residue polypeptide: Large ribosomal subunit protein bL32 (62 aa).

The span at 1-19 shows a compositional bias: basic residues; sequence MAVPKRKTSKTRRDKRRAS. Residues 1-20 are disordered; sequence MAVPKRKTSKTRRDKRRASS.

The protein belongs to the bacterial ribosomal protein bL32 family.

The protein is Large ribosomal subunit protein bL32 of Finegoldia magna (strain ATCC 29328 / DSM 20472 / WAL 2508) (Peptostreptococcus magnus).